The primary structure comprises 165 residues: Regulator of ribonuclease activity A (165 aa).

This sequence belongs to the RraA family. In terms of assembly, homotrimer. Binds to both RNA-binding sites in the C-terminal region of Rne and to RhlB.

It localises to the cytoplasm. In terms of biological role, globally modulates RNA abundance by binding to RNase E (Rne) and regulating its endonucleolytic activity. Can modulate Rne action in a substrate-dependent manner by altering the composition of the degradosome. Modulates RNA-binding and helicase activities of the degradosome. This is Regulator of ribonuclease activity A from Actinobacillus pleuropneumoniae serotype 5b (strain L20).